The sequence spans 469 residues: Trigger factor (469 aa).

A PPIase FKBP-type domain is found at glycine 166–proline 245. A disordered region spans residues glycine 430 to phenylalanine 469.

It belongs to the FKBP-type PPIase family. Tig subfamily.

The protein localises to the cytoplasm. The catalysed reaction is [protein]-peptidylproline (omega=180) = [protein]-peptidylproline (omega=0). Functionally, involved in protein export. Acts as a chaperone by maintaining the newly synthesized protein in an open conformation. Functions as a peptidyl-prolyl cis-trans isomerase. The sequence is that of Trigger factor from Arthrobacter sp. (strain FB24).